A 546-amino-acid chain; its full sequence is Protein HydE (546 aa).

The sequence is that of Protein HydE (hydE) from Wolinella succinogenes (strain ATCC 29543 / DSM 1740 / CCUG 13145 / JCM 31913 / LMG 7466 / NCTC 11488 / FDC 602W) (Vibrio succinogenes).